The chain runs to 475 residues: Sulfate adenylyltransferase subunit 1 (475 aa).

The tr-type G domain occupies 25 to 239 (KSLLRFLTCG…EVLETVEIQR (215 aa)). Residues 34-41 (GSVDDGKS) form a G1 region. Position 34 to 41 (34 to 41 (GSVDDGKS)) interacts with GTP. Residues 92–96 (GITID) are G2. Positions 113–116 (DTPG) are G3. GTP contacts are provided by residues 113 to 117 (DTPGH) and 168 to 171 (NKMD). Residues 168–171 (NKMD) are G4. A G5 region spans residues 206 to 208 (SAL).

It belongs to the TRAFAC class translation factor GTPase superfamily. Classic translation factor GTPase family. CysN/NodQ subfamily. Heterodimer composed of CysD, the smaller subunit, and CysN.

It catalyses the reaction sulfate + ATP + H(+) = adenosine 5'-phosphosulfate + diphosphate. It participates in sulfur metabolism; hydrogen sulfide biosynthesis; sulfite from sulfate: step 1/3. With CysD forms the ATP sulfurylase (ATPS) that catalyzes the adenylation of sulfate producing adenosine 5'-phosphosulfate (APS) and diphosphate, the first enzymatic step in sulfur assimilation pathway. APS synthesis involves the formation of a high-energy phosphoric-sulfuric acid anhydride bond driven by GTP hydrolysis by CysN coupled to ATP hydrolysis by CysD. This is Sulfate adenylyltransferase subunit 1 from Shigella sonnei (strain Ss046).